A 517-amino-acid chain; its full sequence is Nicotine N-demethylase CYP82E4 (517 aa).

Residues 2–22 traverse the membrane as a helical segment; sequence VFPIEAIVGLVTFTFLFFFLW. Residue lysine 254 forms a Glycyl lysine isopeptide (Lys-Gly) (interchain with G-Cter in ubiquitin) linkage. Cysteine 457 provides a ligand contact to heme.

It belongs to the cytochrome P450 family. CYP82E2 subfamily. The cofactor is heme. As to expression, expressed at low levels in green leaves.

Its subcellular location is the membrane. It carries out the reaction (S)-nicotine + reduced [NADPH--hemoprotein reductase] + O2 = (S)-nornicotine + formaldehyde + oxidized [NADPH--hemoprotein reductase] + H2O + H(+). It participates in alkaloid biosynthesis; nicotine biosynthesis. In terms of biological role, involved in the biosynthesis of pyridine alkaloid natural products, leading mainly to the production of anabasine, anatabine, nicotine and nornicotine, effective deterrents against herbivores with antiparasitic and pesticide properties (neurotoxins); nornicotine serves as the precursor in the synthesis of the carcinogen compound N'-nitrosonornicotine (NNN). Catalyzes the demethylation of nicotine to form nornicotine. This is Nicotine N-demethylase CYP82E4 from Nicotiana tabacum (Common tobacco).